The primary structure comprises 364 residues: Chorismate synthase (364 aa).

R47 serves as a coordination point for NADP(+). Residues 125–127 (RFS), G285, 300–304 (KPTPS), and R327 contribute to the FMN site.

It belongs to the chorismate synthase family. Homotetramer. FMNH2 is required as a cofactor.

It catalyses the reaction 5-O-(1-carboxyvinyl)-3-phosphoshikimate = chorismate + phosphate. Its pathway is metabolic intermediate biosynthesis; chorismate biosynthesis; chorismate from D-erythrose 4-phosphate and phosphoenolpyruvate: step 7/7. In terms of biological role, catalyzes the anti-1,4-elimination of the C-3 phosphate and the C-6 proR hydrogen from 5-enolpyruvylshikimate-3-phosphate (EPSP) to yield chorismate, which is the branch point compound that serves as the starting substrate for the three terminal pathways of aromatic amino acid biosynthesis. This reaction introduces a second double bond into the aromatic ring system. The chain is Chorismate synthase from Dehalococcoides mccartyi (strain ATCC BAA-2266 / KCTC 15142 / 195) (Dehalococcoides ethenogenes (strain 195)).